The sequence spans 178 residues: Ribosome maturation factor RimP (178 aa).

It belongs to the RimP family.

The protein resides in the cytoplasm. Its function is as follows. Required for maturation of 30S ribosomal subunits. The protein is Ribosome maturation factor RimP of Maricaulis maris (strain MCS10) (Caulobacter maris).